A 134-amino-acid polypeptide reads, in one-letter code: Transcription antitermination protein NusB (134 aa).

This sequence belongs to the NusB family.

Involved in transcription antitermination. Required for transcription of ribosomal RNA (rRNA) genes. Binds specifically to the boxA antiterminator sequence of the ribosomal RNA (rrn) operons. This chain is Transcription antitermination protein NusB, found in Shewanella oneidensis (strain ATCC 700550 / JCM 31522 / CIP 106686 / LMG 19005 / NCIMB 14063 / MR-1).